Reading from the N-terminus, the 530-residue chain is MDIKNSPSSLNSPSSYNFGQSILPLEHGPIYIPSSYVESHHEYPAMTFYSPAVMNYSIPSSVTNLEEGPGRQITSPNMLWSTPGHLSPLAVHHQLSHLYAEPQKSPWCEARSLEHTLPVSRETLKRKVSGNHCASPVTGPSSKRDAHFCAVCSDYASGYHYGVWSCEGCKAFFKRSIQGHNDYICPATNQCTIDKNRRKSCQACRLRKCYEVGMVKCGSRRERCGYRLVRRQGNAEEQLHCAGKAKRSGGHVPRVRELLLSALSPEQLVLTLLEAEPPHVLISRPSVPFTEASMMMSLTKLADEELVHMISWAKKIPGFVELSLLDQVRLLESCWLEVLMVGLMWRSIDHPGKLIFAPNLILDRDEGKCVEGILEVFDMLLATTSRFRELKLQHKEYLCVKAMVLLNSQYDPLVTATQDAESSQKLAHLLNAVTDALVWVIAKSGFSSQQQSVRLANLLMLLSHIRHASNKGMEHLLSMKCKNVVPVYDLLLEMMNAHVVRGCKSSITGSECSPAEDSKSTEGSQNPQSP.

A modulating region spans residues 1-148 (MDIKNSPSSL…GPSSKRDAHF (148 aa)). A Phosphoserine; alternate modification is found at serine 61. Serine 61 is a glycosylation site (O-linked (GlcNAc) serine; alternate). 2 positions are modified to phosphoserine; by MAPK: serine 87 and serine 105. 2 consecutive NR C4-type zinc fingers follow at residues 149–169 (CAVC…CEGC) and 185–209 (CPAT…LRKC). The nuclear receptor DNA-binding region spans 149–214 (CAVCSDYASG…RLRKCYEVGM (66 aa)). The NR LBD domain occupies 264–498 (SPEQLVLTLL…DLLLEMMNAH (235 aa)). The disordered stretch occupies residues 507–530 (ITGSECSPAEDSKSTEGSQNPQSP). A compositionally biased stretch (polar residues) spans 521 to 530 (TEGSQNPQSP).

This sequence belongs to the nuclear hormone receptor family. NR3 subfamily. In terms of assembly, binds DNA as a homodimer. Can form a heterodimer with ESR1. Interacts with NCOA1, NCOA3, NCOA5 and NCOA6 coactivators, leading to a strong increase of transcription of target genes. Interacts with UBE1C and AKAP13. Interacts with DNTTIP2. Interacts with CCDC62 in the presence of estradiol/E2; this interaction seems to enhance the transcription of target genes. Interacts with DNAAF4. Interacts with PRMT2. Interacts with CCAR2 (via N-terminus) in a ligand-independent manner. Interacts with RBM39, in the presence of estradiol (E2). Interacts with STUB1/CHIP. Post-translationally, phosphorylation at Ser-87 and Ser-105 recruits NCOA1.

Its subcellular location is the nucleus. Its function is as follows. Nuclear hormone receptor. Binds estrogens with an affinity similar to that of ESR1/ER-alpha, and activates expression of reporter genes containing estrogen response elements (ERE) in an estrogen-dependent manner. This is Estrogen receptor beta (ESR2) from Callithrix jacchus (White-tufted-ear marmoset).